The following is a 244-amino-acid chain: S-adenosyl-L-methionine-dependent Diels-Alderase iliD (244 aa).

This sequence belongs to the class I-like SAM-binding methyltransferase superfamily. Erg6/SMT family. S-adenosyl-L-methionine serves as cofactor.

It catalyses the reaction 3-[(2E,4E,8S,10E,12Z)-4,8-dimethyltetradeca-2,4,10,12-tetraenoyl]-4-hydroxy-5-(4-hydroxyphenyl)-1,2-dihydropyridin-2-one = ilicicolin H. The protein operates within mycotoxin biosynthesis. In terms of biological role, S-adenosyl-l-methionine-dependent Diels-Alderase; part of the gene cluster that mediates the biosynthesis of ilicicolin H, a 4-hydroxy-2-pyridonealkaloid that has potent and broad antifungal activities by inhibiting the mitochondrial respiration chain. IliD catalyzes the Diels-Alder reaction that converts the acyclic 2-pyridone intermediate to 8-epi-ilicicolin H. The biosynthesis of ilicicolin H starts with formation of the tetramic acid by the hybrid PKS-NRPS synthetase iliA with the partnering trans-enoyl reductase iliB since iliA lacks a designated enoylreductase (ER) domain. The cytochrome P450 monooxygenase iliC then catalyzes the ring expansion of the tetramate to the acyclic 2-pyridone. The pericyclase iliD further converts the acyclic 2-pyridone into 8-epi-ilicicolin H. 8-epi-ilicicolin H might then spontaneously convert to ilicicolin H since ilicicolin H is produced in the absence of the epimerase iliE, in contrast to what was observed for the Talaromyces variabilis ilicolin H biosynthetic pathway. The protein is S-adenosyl-L-methionine-dependent Diels-Alderase iliD of Neonectria sp. (strain DH2).